We begin with the raw amino-acid sequence, 394 residues long: Protein TsgA homolog (394 aa).

12 consecutive transmembrane segments (helical) span residues 11–31 (WISFFSYALTGAVVIVTGMVL), 51–71 (FLNAGILLAVFLNAWLMEIVP), 76–96 (LIFGFVLMVLAVLGLMNSHSL), 101–121 (LCMFVLGVVSGITMSIGTFLI), 135–155 (LFTDSFFSMAGTLFPIIAAAI), 163–183 (YWVYACIGVIYVAIFILALCF), 205–225 (LGVALLAVAALCYILGQLGFI), 245–265 (SVVGYFWTAYMIGMWAFSAIL), 273–293 (IVTALALASTLLMYWFINTTD), 299–319 (WIIMGLGFFSSAIYTTIITLG), 333–353 (FILTCGTIGTMLTFVVTGPIV), and 362–382 (LATTNSLYAVVFLMCLLLGFV).

The protein belongs to the major facilitator superfamily. TsgA family.

It localises to the cell inner membrane. This Erwinia tasmaniensis (strain DSM 17950 / CFBP 7177 / CIP 109463 / NCPPB 4357 / Et1/99) protein is Protein TsgA homolog.